The primary structure comprises 741 residues: Beta-galactosidase 10 (741 aa).

Residues 1-29 form the signal peptide; that stretch reads MNRVTTESIASTAILVVMVFLFSWRSIEA. An N-linked (GlcNAc...) asparagine glycan is attached at Asn31. Catalysis depends on Glu188, which acts as the Proton donor. Catalysis depends on Glu257, which acts as the Nucleophile. N-linked (GlcNAc...) asparagine glycans are attached at residues Asn358, Asn396, Asn469, Asn525, and Asn583.

The protein belongs to the glycosyl hydrolase 35 family. Ubiquitous.

Its subcellular location is the secreted. It localises to the extracellular space. It is found in the apoplast. The catalysed reaction is Hydrolysis of terminal non-reducing beta-D-galactose residues in beta-D-galactosides.. This Arabidopsis thaliana (Mouse-ear cress) protein is Beta-galactosidase 10 (BGAL10).